We begin with the raw amino-acid sequence, 228 residues long: Ribose-5-phosphate isomerase A (228 aa).

Substrate-binding positions include 32-35, 85-88, and 98-101; these read TGST, DGAD, and KGGG. E107 (proton acceptor) is an active-site residue. Residue K125 coordinates substrate.

This sequence belongs to the ribose 5-phosphate isomerase family. Homodimer.

It carries out the reaction aldehydo-D-ribose 5-phosphate = D-ribulose 5-phosphate. Its pathway is carbohydrate degradation; pentose phosphate pathway; D-ribose 5-phosphate from D-ribulose 5-phosphate (non-oxidative stage): step 1/1. In terms of biological role, catalyzes the reversible conversion of ribose-5-phosphate to ribulose 5-phosphate. The chain is Ribose-5-phosphate isomerase A from Ralstonia pickettii (strain 12J).